The following is a 233-amino-acid chain: uncharacterized protein (233 aa).

This sequence belongs to the methyltransferase superfamily.

This is an uncharacterized protein from Bacillus subtilis (strain 168).